The following is a 282-amino-acid chain: Protoheme IX farnesyltransferase (282 aa).

Helical transmembrane passes span 9–29 (LAKPGIIFGNLITLTGGFLLA), 39–59 (LPLFVYVMIGVALMIAAGCVF), 79–99 (LVTGDISVIQATIYGTILLIL), 102–122 (LVLYYLVNLLTLWIIIIGFIV), 139–159 (VLGGISGAIPPVAGYTAVVNI), 165–185 (LALFLILFFWQIPHSYAIAML), 210–230 (IMLFYLALFVVSCALPAVLGS), 231–251 (ADLFSFIVCMLVALFWMYKSI), and 261–281 (VFAKTVFKFSIIVITAICLTM).

The protein belongs to the UbiA prenyltransferase family. Protoheme IX farnesyltransferase subfamily.

Its subcellular location is the cell inner membrane. The enzyme catalyses heme b + (2E,6E)-farnesyl diphosphate + H2O = Fe(II)-heme o + diphosphate. It functions in the pathway porphyrin-containing compound metabolism; heme O biosynthesis; heme O from protoheme: step 1/1. Functionally, converts heme B (protoheme IX) to heme O by substitution of the vinyl group on carbon 2 of heme B porphyrin ring with a hydroxyethyl farnesyl side group. The polypeptide is Protoheme IX farnesyltransferase (Francisella tularensis subsp. novicida (strain U112)).